Reading from the N-terminus, the 178-residue chain is CDP-diacylglycerol--glycerol-3-phosphate 3-phosphatidyltransferase (178 aa).

4 helical membrane-spanning segments follow: residues 5-25, 32-52, 61-81, and 145-165; these read PNYL…LFYI, KLGA…GYIA, FGKM…TIML, and IIYL…LTII.

This sequence belongs to the CDP-alcohol phosphatidyltransferase class-I family.

The protein localises to the cell membrane. It catalyses the reaction a CDP-1,2-diacyl-sn-glycerol + sn-glycerol 3-phosphate = a 1,2-diacyl-sn-glycero-3-phospho-(1'-sn-glycero-3'-phosphate) + CMP + H(+). It functions in the pathway phospholipid metabolism; phosphatidylglycerol biosynthesis; phosphatidylglycerol from CDP-diacylglycerol: step 1/2. Its function is as follows. This protein catalyzes the committed step to the synthesis of the acidic phospholipids. The protein is CDP-diacylglycerol--glycerol-3-phosphate 3-phosphatidyltransferase (pgsA) of Rickettsia typhi (strain ATCC VR-144 / Wilmington).